We begin with the raw amino-acid sequence, 45 residues long: uncharacterized protein (45 aa).

Residues 15–37 (EVVGTLMAVLITFALVAVVFNFI) form a helical membrane-spanning segment.

The protein resides in the membrane. This is an uncharacterized protein from Archaeoglobus fulgidus (strain ATCC 49558 / DSM 4304 / JCM 9628 / NBRC 100126 / VC-16).